A 1235-amino-acid chain; its full sequence is Topoisomerase 1-associated factor 1 (1235 aa).

Disordered regions lie at residues 327 to 357 (RERKMDNSKTFRPPRRARKPEMEPKDLGPPV), 584 to 610 (GEEAEDVGVPEDNDADDSGDDEQHAER), 812 to 841 (EGAADGEAADERSNKSAPPHITIRPDTEAR), and 897 to 1235 (EFSP…SDEE). The span at 585 to 603 (EEAEDVGVPEDNDADDSGD) shows a compositional bias: acidic residues. A compositionally biased stretch (acidic residues) spans 929-947 (DDDEEEIRGFLGDDDDEDF). Residues 964-973 (QKKRQRKRRR) show a composition bias toward basic residues. Acidic residues predominate over residues 977–986 (SGDEEDEGVS). Basic and acidic residues predominate over residues 999–1044 (EKELEKIRKIKSEMYVHASDDETDDERDREFFERERKRQETKDSKF). Acidic residues-rich tracts occupy residues 1070 to 1081 (VLDDEPESDESE) and 1099 to 1118 (SEEEQEEEEEEEEEEDSDEE). The span at 1124-1150 (AKSKTSKRKAAVPSKRPARRPGTAKKR) shows a compositional bias: basic residues. The segment covering 1156–1170 (SDNDEDEDEEEDAMD) has biased composition (acidic residues). The segment covering 1193–1202 (LGRRIDKMAM) has biased composition (basic and acidic residues). Residues 1203 to 1212 (DDGDEDEDDQ) show a composition bias toward acidic residues.

This sequence belongs to the timeless family. Component of the fork protection complex (FPC) consisting of tof-1 and csm-3.

The protein resides in the nucleus. In terms of biological role, forms a fork protection complex (FPC) with csm-3 and which is required for chromosome segregation during meiosis and DNA damage repair. FPC coordinates leading and lagging strand synthesis and moves with the replication fork. FPC stabilizes replication forks in a configuration that is recognized by replication checkpoint sensors. The chain is Topoisomerase 1-associated factor 1 (tof-1) from Neurospora crassa (strain ATCC 24698 / 74-OR23-1A / CBS 708.71 / DSM 1257 / FGSC 987).